Reading from the N-terminus, the 87-residue chain is Small ribosomal subunit protein bS20 (87 aa).

The interval 1 to 26 is disordered; that stretch reads MANTAQAKKRVRQNIKQRERNSGLRS.

This sequence belongs to the bacterial ribosomal protein bS20 family.

Binds directly to 16S ribosomal RNA. The polypeptide is Small ribosomal subunit protein bS20 (Nitrosomonas eutropha (strain DSM 101675 / C91 / Nm57)).